Consider the following 155-residue polypeptide: Ribosome maturation factor RimP (155 aa).

This sequence belongs to the RimP family.

The protein localises to the cytoplasm. Its function is as follows. Required for maturation of 30S ribosomal subunits. The chain is Ribosome maturation factor RimP from Desulforapulum autotrophicum (strain ATCC 43914 / DSM 3382 / VKM B-1955 / HRM2) (Desulfobacterium autotrophicum).